We begin with the raw amino-acid sequence, 852 residues long: Envelope glycoprotein gp160 (852 aa).

A signal peptide spans M1–D32. The Extracellular segment spans residues K33–I680. A glycan (N-linked (GlcNAc...) asparagine; by host) is linked at N49. An intrachain disulfide couples C54 to C74. N-linked (GlcNAc...) asparagine; by host glycans are attached at residues N88, N135, N138, N154, N158, N197, N234, N241, N262, N276, N289, N295, N301, N331, N354, and N360. Disulfide bonds link C119-C205, C126-C196, C131-C155, C218-C247, and C228-C239. Positions C131 to N154 are V1. The segment at C155–C196 is V2. Residues C296 to H329 are V3. A disulfide bridge connects residues C296 and C330. Positions S362–H372 are CD4-binding loop. 2 cysteine pairs are disulfide-bonded: C376/C439 and C383/C412. The segment at C383–C412 is V4. N-linked (GlcNAc...) asparagine; by host glycans are attached at residues N384, N390, N396, N400, N442, and N456. V5 stretches follow at residues N454–G467 and E457–G467. Residues A508–A528 form a fusion peptide region. The segment at K570–L588 is immunosuppression. The cysteines at positions 594 and 600 are disulfide-linked. Residues N607, N612, N621, N633, and N670 are each glycosylated (N-linked (GlcNAc...) asparagine; by host). A coiled-coil region spans residues R629–A663. Residues E658–K679 are MPER; binding to GalCer. The helical transmembrane segment at F681–V701 threads the bilayer. Topologically, residues N702–Q852 are cytoplasmic. The YXXL motif; contains endocytosis signal motif lies at Y708 to L711. The segment at T715–S741 is disordered.

It belongs to the HIV-1 env protein family. As to quaternary structure, the mature envelope protein (Env) consists of a homotrimer of non-covalently associated gp120-gp41 heterodimers. The resulting complex protrudes from the virus surface as a spike. There seems to be as few as 10 spikes on the average virion. Interacts with host CD4, CCR5 and CXCR4. Gp120 also interacts with the C-type lectins CD209/DC-SIGN and CLEC4M/DC-SIGNR (collectively referred to as DC-SIGN(R)). Gp120 and gp41 interact with GalCer. Gp120 interacts with host ITGA4/ITGB7 complex; on CD4+ T-cells, this interaction results in rapid activation of integrin ITGAL/LFA-1, which facilitates efficient cell-to-cell spreading of HIV-1. Gp120 interacts with cell-associated heparan sulfate; this interaction increases virus infectivity on permissive cells and may be involved in infection of CD4- cells. In terms of assembly, the mature envelope protein (Env) consists of a homotrimer of non-covalently associated gp120-gp41 heterodimers. The resulting complex protrudes from the virus surface as a spike. There seems to be as few as 10 spikes on the average virion. In terms of processing, highly glycosylated by host. The high number of glycan on the protein is reffered to as 'glycan shield' because it contributes to hide protein sequence from adaptive immune system. Post-translationally, palmitoylation of the transmembrane protein and of Env polyprotein (prior to its proteolytic cleavage) is essential for their association with host cell membrane lipid rafts. Palmitoylation is therefore required for envelope trafficking to classical lipid rafts, but not for viral replication. Specific enzymatic cleavages in vivo yield mature proteins. Envelope glycoproteins are synthesized as an inactive precursor that is heavily N-glycosylated and processed likely by host cell furin in the Golgi to yield the mature SU and TM proteins. The cleavage site between SU and TM requires the minimal sequence [KR]-X-[KR]-R. About 2 of the 9 disulfide bonds of gp41 are reduced by P4HB/PDI, following binding to CD4 receptor.

It is found in the virion membrane. The protein localises to the host cell membrane. Its subcellular location is the host endosome membrane. In terms of biological role, oligomerizes in the host endoplasmic reticulum into predominantly trimers. In a second time, gp160 transits in the host Golgi, where glycosylation is completed. The precursor is then proteolytically cleaved in the trans-Golgi and thereby activated by cellular furin or furin-like proteases to produce gp120 and gp41. Attaches the virus to the host lymphoid cell by binding to the primary receptor CD4. This interaction induces a structural rearrangement creating a high affinity binding site for a chemokine coreceptor like CXCR4 and/or CCR5. Acts as a ligand for CD209/DC-SIGN and CLEC4M/DC-SIGNR, which are respectively found on dendritic cells (DCs), and on endothelial cells of liver sinusoids and lymph node sinuses. These interactions allow capture of viral particles at mucosal surfaces by these cells and subsequent transmission to permissive cells. HIV subverts the migration properties of dendritic cells to gain access to CD4+ T-cells in lymph nodes. Virus transmission to permissive T-cells occurs either in trans (without DCs infection, through viral capture and transmission), or in cis (following DCs productive infection, through the usual CD4-gp120 interaction), thereby inducing a robust infection. In trans infection, bound virions remain infectious over days and it is proposed that they are not degraded, but protected in non-lysosomal acidic organelles within the DCs close to the cell membrane thus contributing to the viral infectious potential during DCs' migration from the periphery to the lymphoid tissues. On arrival at lymphoid tissues, intact virions recycle back to DCs' cell surface allowing virus transmission to CD4+ T-cells. Functionally, acts as a class I viral fusion protein. Under the current model, the protein has at least 3 conformational states: pre-fusion native state, pre-hairpin intermediate state, and post-fusion hairpin state. During fusion of viral and target intracellular membranes, the coiled coil regions (heptad repeats) assume a trimer-of-hairpins structure, positioning the fusion peptide in close proximity to the C-terminal region of the ectodomain. The formation of this structure appears to drive apposition and subsequent fusion of viral and target cell membranes. Complete fusion occurs in host cell endosomes and is dynamin-dependent, however some lipid transfer might occur at the plasma membrane. The virus undergoes clathrin-dependent internalization long before endosomal fusion, thus minimizing the surface exposure of conserved viral epitopes during fusion and reducing the efficacy of inhibitors targeting these epitopes. Membranes fusion leads to delivery of the nucleocapsid into the cytoplasm. The polypeptide is Envelope glycoprotein gp160 (Human immunodeficiency virus type 1 group M subtype B (isolate BRVA) (HIV-1)).